A 153-amino-acid chain; its full sequence is Peritrophin-1 (153 aa).

A signal peptide spans 1 to 17 (MKVSASLVLLLAAAVLA). Chitin-binding type-2 domains follow at residues 18-79 (DDRC…QCAP) and 92-153 (SPNC…QCEE). 2 disulfide bridges follow: Cys56/Cys69 and Cys130/Cys143. An N-linked (GlcNAc...) asparagine glycan is attached at Asn63.

Post-translationally, glycosylated. Adult peritrophic membrane.

Functionally, binds chitin but not cellulose. May be involved in the spatial organization of PM. This is Peritrophin-1 (Aper1) from Anopheles gambiae (African malaria mosquito).